Reading from the N-terminus, the 413-residue chain is Multifunctional CCA protein (413 aa).

Positions 8 and 11 each coordinate ATP. CTP is bound by residues glycine 8 and arginine 11. Mg(2+)-binding residues include aspartate 21 and aspartate 23. Positions 91, 143, and 146 each coordinate ATP. CTP contacts are provided by arginine 91, arginine 143, and arginine 146. The 102-residue stretch at 232 to 333 (TGVHVMMVID…VRLLERADAL (102 aa)) folds into the HD domain.

Belongs to the tRNA nucleotidyltransferase/poly(A) polymerase family. Bacterial CCA-adding enzyme type 1 subfamily. As to quaternary structure, monomer. Can also form homodimers and oligomers. The cofactor is Mg(2+). It depends on Ni(2+) as a cofactor.

The enzyme catalyses a tRNA precursor + 2 CTP + ATP = a tRNA with a 3' CCA end + 3 diphosphate. The catalysed reaction is a tRNA with a 3' CCA end + 2 CTP + ATP = a tRNA with a 3' CCACCA end + 3 diphosphate. Functionally, catalyzes the addition and repair of the essential 3'-terminal CCA sequence in tRNAs without using a nucleic acid template. Adds these three nucleotides in the order of C, C, and A to the tRNA nucleotide-73, using CTP and ATP as substrates and producing inorganic pyrophosphate. tRNA 3'-terminal CCA addition is required both for tRNA processing and repair. Also involved in tRNA surveillance by mediating tandem CCA addition to generate a CCACCA at the 3' terminus of unstable tRNAs. While stable tRNAs receive only 3'-terminal CCA, unstable tRNAs are marked with CCACCA and rapidly degraded. The chain is Multifunctional CCA protein from Burkholderia mallei (strain NCTC 10247).